A 253-amino-acid chain; its full sequence is H repeat-associated putative transposase YbfD (253 aa).

Belongs to the transposase 11 family.

This chain is H repeat-associated putative transposase YbfD (ybfD), found in Escherichia coli (strain K12).